A 328-amino-acid polypeptide reads, in one-letter code: MGGAARLSAPQALVLWAALGAAAHIGPAPDPEDWWSYKENLQGNFVPGPPFWGLVNAAWSLCAVGKRQSPVDVELKRVLYDPFLPPLRLSTGGEKLRGTLYNTGRHVSFLPASRPVVNVSGGPLLYSHRLSELRLLFGARDGAGSEHQINHEGFSAEVQLIHFNQELYGNLSAASRGPNGLAILSLFVNVAGSSNPFLSRLLNRDTITRISYKNDAYFLQDLSLELLFPESFGFITYQGSLSTPPCSETVTWILIDRALNITSLQMHSLRLLSQNPPSQIFQSLSGNGRPLQPLAHRALRGNRDPRHPERRCRGPNYRLHVDGGPHGR.

The signal sequence occupies residues 1–23 (MGGAARLSAPQALVLWAALGAAA). The 271-residue stretch at 33–303 (DWWSYKENLQ…LAHRALRGNR (271 aa)) folds into the Alpha-carbonic anhydrase domain. Asn118 is a glycosylation site (N-linked (GlcNAc...) asparagine). Residues 300–328 (RGNRDPRHPERRCRGPNYRLHVDGGPHGR) form a disordered region. Residues 319–328 (LHVDGGPHGR) are compositionally biased toward basic and acidic residues.

The protein belongs to the alpha-carbonic anhydrase family.

It localises to the secreted. Its function is as follows. Does not have a catalytic activity. The chain is Carbonic anhydrase-related protein 11 (Ca11) from Mus musculus (Mouse).